The following is a 345-amino-acid chain: Sulfate/thiosulfate import ATP-binding protein CysA (345 aa).

Residues 3–237 (IQVSGLCKHF…PRTEFVYQFV (235 aa)) enclose the ABC transporter domain. Residue 35–42 (GPSGCGKT) participates in ATP binding.

Belongs to the ABC transporter superfamily. Sulfate/tungstate importer (TC 3.A.1.6) family. The complex is composed of two ATP-binding proteins (CysA), two transmembrane proteins (CysT and CysW) and a solute-binding protein (CysP).

Its subcellular location is the cell inner membrane. It carries out the reaction sulfate(out) + ATP + H2O = sulfate(in) + ADP + phosphate + H(+). It catalyses the reaction thiosulfate(out) + ATP + H2O = thiosulfate(in) + ADP + phosphate + H(+). Part of the ABC transporter complex CysAWTP involved in sulfate/thiosulfate import. Responsible for energy coupling to the transport system. The sequence is that of Sulfate/thiosulfate import ATP-binding protein CysA from Vibrio vulnificus (strain CMCP6).